A 122-amino-acid chain; its full sequence is Proteasome assembly chaperone 3 (122 aa).

Methionine 1 carries the N-acetylmethionine modification.

This sequence belongs to the PSMG3 family. Homodimer. Interacts directly with alpha and beta subunits of the 20S proteasome but dissociates before the formation of half-proteasomes, probably upon recruitment of POMP. Interacts with PSMG4.

In terms of biological role, chaperone protein which promotes assembly of the 20S proteasome. May cooperate with PSMG1-PSMG2 heterodimers to orchestrate the correct assembly of proteasomes. This is Proteasome assembly chaperone 3 (Psmg3) from Mus musculus (Mouse).